We begin with the raw amino-acid sequence, 1342 residues long: WD repeat-containing protein 19 (1342 aa).

6 WD repeats span residues 11–51, 52–92, 95–134, 137–175, 273–311, and 317–356; these read TWLG…RSEI, NLPG…TSQL, GMRD…KIPV, KHTK…IRQT, NHKD…DMYV, and EENK…LGDA. TPR repeat units follow at residues 736 to 769, 775 to 808, 840 to 873, 895 to 928, 951 to 984, and 1020 to 1053; these read AQDL…AKHL, PFIS…DNKE, RVLK…DKAA, PKIH…QSVI, LDGA…NEAF, and EKRY…EDNV.

As to quaternary structure, component of the IFT complex A (IFT-A) complex. IFT-A complex is divided into a core subcomplex composed of IFT122:IFT140:WDR19 which is associated with TULP3 and a peripheral subcomplex composed of IFT43:WDR35:TTC21B. Interacts (via C-terminal region) with IFT122 (via C-terminal region). Interacts with BBS1. Interacts with TTC25. In terms of tissue distribution, some isoforms are tissue-specific. Highly expressed in the prostate. Lower expression in the cerebellum, pituitary gland, fetal lung, and pancreas. In normal prostate, expressed in both basal and luminal epithelial cells. No expression detected in fibromuscular stromal cells, endothelial cells, or infiltrating lymphocytes. Uniformed expression in prostate adenocarcinoma cells.

It is found in the cell projection. Its subcellular location is the cilium. The protein localises to the cytoplasm. The protein resides in the cytoskeleton. It localises to the cilium basal body. It is found in the photoreceptor outer segment. Its subcellular location is the flagellum. In terms of biological role, as component of the IFT complex A (IFT-A), a complex required for retrograde ciliary transport and entry into cilia of G protein-coupled receptors (GPCRs), it is involved in cilia function and/or assembly. Essential for functional IFT-A assembly and ciliary entry of GPCRs. Associates with the BBSome complex to mediate ciliary transport. This Homo sapiens (Human) protein is WD repeat-containing protein 19.